The chain runs to 353 residues: MPSSPVRIGVVFGGASGEHAVSIRSAITVINALQEGQNRDHFEVVPLYIDQEGRWWPEHIANSVLEQKQPLAEDSLPHPLPPAGFRSLPIDNDRVDVWFPVLHGPNGEDGTVQGLFTLMGQPYVGSGVLGSAVGMDKLAMKAAFAAAGLPQVPYVGLNVADLNHPERQNKLVARIEAELGYPCFVKPANMGSSVGISKARHRDQLLAGLKEAARHDTRLVVEHGVSARELECAVLGRQQLKASVVGEISFEADWYDYETKYTDGCSQTLIPAPLPDQVSAQIQAIALQACTAVHAYGLARVDVFYDEKSGDIWLNEINTLPGFTSQSMYPMLWEASGVALPDLVAQLVHTARE.

In terms of domain architecture, ATP-grasp spans 141–349; that stretch reads KAAFAAAGLP…LPDLVAQLVH (209 aa). 176–231 contributes to the ATP binding site; the sequence is EAELGYPCFVKPANMGSSVGISKARHRDQLLAGLKEAARHDTRLVVEHGVSARELE. Residues Asp-302, Glu-316, and Asn-318 each coordinate Mg(2+).

The protein belongs to the D-alanine--D-alanine ligase family. Requires Mg(2+) as cofactor. The cofactor is Mn(2+).

It is found in the cytoplasm. It catalyses the reaction 2 D-alanine + ATP = D-alanyl-D-alanine + ADP + phosphate + H(+). Its pathway is cell wall biogenesis; peptidoglycan biosynthesis. Cell wall formation. This chain is D-alanine--D-alanine ligase, found in Synechococcus sp. (strain CC9311).